The sequence spans 196 residues: Nucleoside triphosphate pyrophosphatase (196 aa).

The Proton acceptor role is filled by aspartate 73.

It belongs to the Maf family. A divalent metal cation is required as a cofactor.

The protein localises to the cytoplasm. The catalysed reaction is a ribonucleoside 5'-triphosphate + H2O = a ribonucleoside 5'-phosphate + diphosphate + H(+). It carries out the reaction a 2'-deoxyribonucleoside 5'-triphosphate + H2O = a 2'-deoxyribonucleoside 5'-phosphate + diphosphate + H(+). Functionally, nucleoside triphosphate pyrophosphatase. May have a dual role in cell division arrest and in preventing the incorporation of modified nucleotides into cellular nucleic acids. The polypeptide is Nucleoside triphosphate pyrophosphatase (Anaplasma marginale (strain Florida)).